A 605-amino-acid chain; its full sequence is MALPSQEVSRTRNFCIIAHIDHGKSTLADRLLEVTHTLDRTQMSSAQVLDDMDLEKERGITIKSHAVQMKFKAEDGQEYILNLIDTPGHVDFSYEVSRSLAACEGALLIVDATQGVEAQTIANLYLAIEAGLEIIPVMNKIDLPSSDVEGVASQIIDLIGVERDEILQVSAKAGTGIDKLMDAIIARIPSPKDNKHLPLRALIFDSVFDPYRGAVVYLRIVDGVLNKGDRVRFFANDHIYTADEIGTMSLKRQPKETLASGNVGYLICSIKDVKDAKVGDTVTHADTPASEPLSGYKDVKPMVYSGLYPVNSNEFEDLRESLEKLSLNDASLVYTPETSVALGFGFRCGFLGLLHMEIIQERLEREYGVNIITTVPNVEYRVILTNSDVIEVDNPSKMPDTTKINHVEEPYVSMQIITLSEYIGNIMKLGMERRGEYKNTDYLDSSRVIMHFEFPLGEIVFDFHDKLKSISKGYASMDYEYIGYRESDLVKLDVLLNGEPVDALSIIVHRSKAYEWGRKLCQKLKGIIPKQMYEVAIQAAIGSRVISRETISAMRKNVLAKCYGGDISRKRKLLEKQKEGKKRMKQVGRVEVPQEAFLAILNIDE.

Residues 9 to 192 (SRTRNFCIIA…AIIARIPSPK (184 aa)) form the tr-type G domain. GTP is bound by residues 21–26 (DHGKST) and 139–142 (NKID).

The protein belongs to the TRAFAC class translation factor GTPase superfamily. Classic translation factor GTPase family. LepA subfamily.

The protein localises to the cell inner membrane. The catalysed reaction is GTP + H2O = GDP + phosphate + H(+). In terms of biological role, required for accurate and efficient protein synthesis under certain stress conditions. May act as a fidelity factor of the translation reaction, by catalyzing a one-codon backward translocation of tRNAs on improperly translocated ribosomes. Back-translocation proceeds from a post-translocation (POST) complex to a pre-translocation (PRE) complex, thus giving elongation factor G a second chance to translocate the tRNAs correctly. Binds to ribosomes in a GTP-dependent manner. In Chlorobium limicola (strain DSM 245 / NBRC 103803 / 6330), this protein is Elongation factor 4.